We begin with the raw amino-acid sequence, 179 residues long: UPF0227 protein VP0969 (179 aa).

It belongs to the UPF0227 family.

The protein is UPF0227 protein VP0969 of Vibrio parahaemolyticus serotype O3:K6 (strain RIMD 2210633).